The sequence spans 470 residues: MSLSRRQFIQASGIALCAGAVPLKASAAGQQQPLPVPPLLESRRGQPLFMTVQRAHWSFTPGTRASVWGINGRYLGPTIRVWKGDDVKLIYSNRLTENVSMTVAGLQVPGPLMGGPARMMSPNADWAPVLPIRQNAATLWYHANTPNRTAQQVYNGLAGMWLVEDEVSKSLPIPNHYGVDDFPVIIQDKRLDNFGTPEYNEPGSGGFVGDTLLVNGVQSPYVEVSRGWVRLRLLNASNSRRYQLQMNDGRPLHVISGDQGFLPAPVSVKQLSLAPGERREILVDMSNGDEVSITCGEAASIVDRIRGFFEPSSILVSTLVLTLRPTGLLPLVTDSLPMRLLPTEIMAGSPIRSRDISLGDDPGINGQLWDVNRIDVTAQQGTWERWTVRADEPQAFHIEGVMFQIRNVNGAMPFPEDRGWKDTVWVDGQVELLVYFGQPSWAHFPFYFNSQTLEMADRGSIGQLLVNPVP.

Positions 1–27 (MSLSRRQFIQASGIALCAGAVPLKASA) form a signal peptide, tat-type signal. The 97-residue stretch at 68-164 (WGINGRYLGP…NGLAGMWLVE (97 aa)) folds into the Plastocyanin-like domain.

The protein belongs to the FtsP family. In terms of processing, exported by the Tat system. The position of the signal peptide cleavage has been experimentally proven. Can also be exported by the Sec system.

The protein resides in the periplasm. In terms of biological role, cell division protein that is required for growth during stress conditions. May be involved in protecting or stabilizing the divisomal assembly under conditions of stress. The protein is Cell division protein FtsP of Escherichia coli (strain K12).